The primary structure comprises 370 residues: mRNA cap guanine-N(7) methyltransferase 1 (370 aa).

Residues 1-11 are compositionally biased toward low complexity; sequence MKRGFSDSPSS. Residues 1–34 are disordered; the sequence is MKRGFSDSPSSSAPPPSSRFKSNPEGDSQFLEDE. An mRNA cap 0 methyltransferase domain is found at 61–341; it reads SPIIHLKKLN…LYLSFVLRKR (281 aa). Residue 70 to 71 coordinates mRNA; sequence NN. S-adenosyl-L-methionine-binding positions include Lys74, Ala92, Asp114, 150 to 151, and 172 to 174; these read DC and QFA.

This sequence belongs to the class I-like SAM-binding methyltransferase superfamily. mRNA cap 0 methyltransferase family.

Its subcellular location is the nucleus. The enzyme catalyses a 5'-end (5'-triphosphoguanosine)-ribonucleoside in mRNA + S-adenosyl-L-methionine = a 5'-end (N(7)-methyl 5'-triphosphoguanosine)-ribonucleoside in mRNA + S-adenosyl-L-homocysteine. MRNA-capping methyltransferase that methylates the N7 position of the added guanosine to the 5'-cap structure of mRNAs. Binds RNA containing 5'-terminal GpppC. The polypeptide is mRNA cap guanine-N(7) methyltransferase 1 (Arabidopsis thaliana (Mouse-ear cress)).